The primary structure comprises 79 residues: Defensin-like protein 3 (79 aa).

The first 29 residues, 1-29 (MAKFASIVALLFAALVVFAAFEAPTVVEA), serve as a signal peptide directing secretion. Cystine bridges form between cysteine 32-cysteine 79, cysteine 43-cysteine 64, cysteine 49-cysteine 73, and cysteine 53-cysteine 75.

This sequence belongs to the DEFL family.

The protein resides in the secreted. In terms of biological role, possesses antifungal activity sensitive to inorganic cations. In Raphanus sativus (Radish), this protein is Defensin-like protein 3 (AFP3).